The following is a 452-amino-acid chain: Bifunctional F420 biosynthesis protein FbiB (452 aa).

The interval 1–248 (MVSAPGDHAG…AGEEDLFWLG (248 aa)) is coenzyme F420:L-glutamate ligase. Residues 24 to 27 (LPEF), S54, and K59 each bind GTP. Residue D113 participates in a divalent metal cation binding. N116 provides a ligand contact to GTP. A divalent metal cation contacts are provided by D154 and T155. Residues 249-452 (TAEAVERGRR…RDPGDGLVER (204 aa)) are dehydro-coenzyme F420-0 reductase. FMN contacts are provided by residues 264–268 (RRSVR) and A292. D324 is a binding site for coenzyme F420-(gamma-Glu)n. 2 residues coordinate FMN: G403 and R440.

It in the N-terminal section; belongs to the CofE family. Requires Mg(2+) as cofactor. Mn(2+) is required as a cofactor. K(+) serves as cofactor.

The catalysed reaction is oxidized coenzyme F420-0 + GTP + L-glutamate = oxidized coenzyme F420-1 + GDP + phosphate + H(+). The enzyme catalyses oxidized coenzyme F420-0 + FMN + H(+) = dehydro coenzyme F420-0 + FMNH2. It carries out the reaction oxidized coenzyme F420-1 + GTP + L-glutamate = oxidized coenzyme F420-2 + GDP + phosphate + H(+). It participates in cofactor biosynthesis; coenzyme F420 biosynthesis. Functionally, bifunctional enzyme that catalyzes the GTP-dependent successive addition of two or more gamma-linked L-glutamates to the L-lactyl phosphodiester of 7,8-didemethyl-8-hydroxy-5-deazariboflavin (F420-0) to form polyglutamated F420 derivatives, and the FMNH2-dependent reduction of dehydro-F420-0 to form F420-0. The sequence is that of Bifunctional F420 biosynthesis protein FbiB from Nocardia farcinica (strain IFM 10152).